Here is a 201-residue protein sequence, read N- to C-terminus: Holliday junction branch migration complex subunit RuvA (201 aa).

Residues 1–63 (MYDYIKGTVT…EDNISLFGFQ (63 aa)) form a domain I region. Residues 64–142 (TTEERYLFKK…DVVASEIVYV (79 aa)) are domain II. Positions 143–153 (APENDMVAGLS) are flexible linker. A domain III region spans residues 153–201 (SPQLEEAVLALEALGYSTRELKKVIPKLSKEEDLTSDAYIKLALQLMTK).

The protein belongs to the RuvA family. Homotetramer. Forms an RuvA(8)-RuvB(12)-Holliday junction (HJ) complex. HJ DNA is sandwiched between 2 RuvA tetramers; dsDNA enters through RuvA and exits via RuvB. An RuvB hexamer assembles on each DNA strand where it exits the tetramer. Each RuvB hexamer is contacted by two RuvA subunits (via domain III) on 2 adjacent RuvB subunits; this complex drives branch migration. In the full resolvosome a probable DNA-RuvA(4)-RuvB(12)-RuvC(2) complex forms which resolves the HJ.

The protein localises to the cytoplasm. In terms of biological role, the RuvA-RuvB-RuvC complex processes Holliday junction (HJ) DNA during genetic recombination and DNA repair, while the RuvA-RuvB complex plays an important role in the rescue of blocked DNA replication forks via replication fork reversal (RFR). RuvA specifically binds to HJ cruciform DNA, conferring on it an open structure. The RuvB hexamer acts as an ATP-dependent pump, pulling dsDNA into and through the RuvAB complex. HJ branch migration allows RuvC to scan DNA until it finds its consensus sequence, where it cleaves and resolves the cruciform DNA. The polypeptide is Holliday junction branch migration complex subunit RuvA (Listeria monocytogenes serotype 4b (strain CLIP80459)).